We begin with the raw amino-acid sequence, 432 residues long: Trigger factor (432 aa).

The PPIase FKBP-type domain maps to 162–247; sequence GDLVKFDYQG…VKEVQAPVLP (86 aa).

The protein belongs to the FKBP-type PPIase family. Tig subfamily.

The protein localises to the cytoplasm. The enzyme catalyses [protein]-peptidylproline (omega=180) = [protein]-peptidylproline (omega=0). Functionally, involved in protein export. Acts as a chaperone by maintaining the newly synthesized protein in an open conformation. Functions as a peptidyl-prolyl cis-trans isomerase. This Thiobacillus denitrificans (strain ATCC 25259 / T1) protein is Trigger factor.